A 219-amino-acid polypeptide reads, in one-letter code: Eukaryotic translation initiation factor 3 subunit K (219 aa).

The PCI domain maps to 43 to 205 (YDLEANLAVL…SVKPKNIVEK (163 aa)).

This sequence belongs to the eIF-3 subunit K family. In terms of assembly, component of the eukaryotic translation initiation factor 3 (eIF-3) complex, which is composed of 13 subunits: eif3a, eif3b, eif3c, eif3d, eif3e, eif3f, eif3g, eif3h, eif3i, eif3j, eif3k, eif3l and eif3m.

The protein localises to the nucleus. Its subcellular location is the cytoplasm. In terms of biological role, component of the eukaryotic translation initiation factor 3 (eIF-3) complex, which is involved in protein synthesis of a specialized repertoire of mRNAs and, together with other initiation factors, stimulates binding of mRNA and methionyl-tRNAi to the 40S ribosome. The eIF-3 complex specifically targets and initiates translation of a subset of mRNAs involved in cell proliferation. This Danio rerio (Zebrafish) protein is Eukaryotic translation initiation factor 3 subunit K (eif3k).